The chain runs to 149 residues: Transcriptional repressor NrdR (149 aa).

A zinc finger lies at 3–34; it reads CPFCSAVDTKVIDSRLVGEGSSVRRRRQCLVC. One can recognise an ATP-cone domain in the interval 49 to 139; that stretch reads PRVVKSNDVR…VYRSFEDIKE (91 aa).

It belongs to the NrdR family. The cofactor is Zn(2+).

Functionally, negatively regulates transcription of bacterial ribonucleotide reductase nrd genes and operons by binding to NrdR-boxes. The protein is Transcriptional repressor NrdR of Enterobacter sp. (strain 638).